A 93-amino-acid chain; its full sequence is Small ribosomal subunit protein uS15 (93 aa).

It belongs to the universal ribosomal protein uS15 family. As to quaternary structure, part of the 30S ribosomal subunit. Forms a bridge to the 50S subunit in the 70S ribosome, contacting the 23S rRNA.

In terms of biological role, one of the primary rRNA binding proteins, it binds directly to 16S rRNA where it helps nucleate assembly of the platform of the 30S subunit by binding and bridging several RNA helices of the 16S rRNA. Functionally, forms an intersubunit bridge (bridge B4) with the 23S rRNA of the 50S subunit in the ribosome. The polypeptide is Small ribosomal subunit protein uS15 (Anaplasma marginale (strain St. Maries)).